We begin with the raw amino-acid sequence, 544 residues long: Phosphomannomutase (544 aa).

Residue S145 is the Phosphoserine intermediate of the active site. The Mg(2+) site is built by S145, D297, D299, and D301.

It belongs to the phosphohexose mutase family. It depends on Mg(2+) as a cofactor.

The enzyme catalyses alpha-D-mannose 1-phosphate = D-mannose 6-phosphate. The chain is Phosphomannomutase (manB) from Mycoplasmoides pirum (Mycoplasma pirum).